Reading from the N-terminus, the 321-residue chain is Proline-rich protein 2 (321 aa).

Positions 1-26 (MRILPKSGGGALCLLFVFALCSVAHS) are cleaved as a signal peptide. 24 repeat units span residues 168-172 (PPLNL), 173-176 (PPLT), 177-181 (FPKIK), 185-189 (PPIYK), 190-194 (PPVVI), 198-202 (PCPPK), 207-211 (PIYKP), 212-217 (PVPIYK), 218-223 (PPVPIY), 225-229 (PPVVI), 234-238 (CPPKI), 240-244 (KPIYK), 245-251 (PPVPIYK), 252-256 (PPVVI), 262-266 (PPLHK), 267-271 (PIYKH), 272-276 (PVPIY), 277-281 (KPIFK), 282-286 (PPVVV), 288-292 (PKKPC), 293-297 (PPLPK), 298-302 (FPHFP), 303-307 (PKYIP), and 315-319 (PPFPS). A 24 X 5 AA approximate repeats region spans residues 168-319 (PPLNLPPLTF…KFGKWPPFPS (152 aa)).

The protein belongs to the plant proline-rich protein superfamily. In terms of tissue distribution, mostly expressed in aerial organs, particularly in expanding leaves, stems, flowers, and siliques.

It localises to the secreted. It is found in the cell wall. The polypeptide is Proline-rich protein 2 (PRP2) (Arabidopsis thaliana (Mouse-ear cress)).